Here is a 511-residue protein sequence, read N- to C-terminus: Probable cytosol aminopeptidase (511 aa).

Positions 255 and 260 each coordinate Mn(2+). The active site involves Lys-267. Residues Asp-278, Asp-337, and Glu-339 each coordinate Mn(2+). The active site involves Arg-341. The segment at 485–511 is disordered; sequence GAAQAVSPKKAARKEPGAAARKARSAQ.

It belongs to the peptidase M17 family. The cofactor is Mn(2+).

The protein localises to the cytoplasm. It carries out the reaction Release of an N-terminal amino acid, Xaa-|-Yaa-, in which Xaa is preferably Leu, but may be other amino acids including Pro although not Arg or Lys, and Yaa may be Pro. Amino acid amides and methyl esters are also readily hydrolyzed, but rates on arylamides are exceedingly low.. The enzyme catalyses Release of an N-terminal amino acid, preferentially leucine, but not glutamic or aspartic acids.. In terms of biological role, presumably involved in the processing and regular turnover of intracellular proteins. Catalyzes the removal of unsubstituted N-terminal amino acids from various peptides. This chain is Probable cytosol aminopeptidase, found in Variovorax paradoxus (strain S110).